The primary structure comprises 519 residues: Cytochrome P450 4A11 (519 aa).

Positions 1–4 (MSVS) are excised as a propeptide. Glu-321 serves as a coordination point for heme. Residue Ser-440 is modified to Phosphoserine. Cys-457 contacts heme.

It belongs to the cytochrome P450 family. Heme is required as a cofactor. Expressed in liver. Expressed in S2 and S3 segments of proximal tubules in cortex and outer medulla of kidney.

It is found in the endoplasmic reticulum membrane. The protein localises to the microsome membrane. It catalyses the reaction an organic molecule + reduced [NADPH--hemoprotein reductase] + O2 = an alcohol + oxidized [NADPH--hemoprotein reductase] + H2O + H(+). It carries out the reaction an omega-methyl-long-chain fatty acid + reduced [NADPH--hemoprotein reductase] + O2 = an omega-hydroxy-long-chain fatty acid + oxidized [NADPH--hemoprotein reductase] + H2O + H(+). The enzyme catalyses dodecanoate + reduced [NADPH--hemoprotein reductase] + O2 = 12-hydroxydodecanoate + oxidized [NADPH--hemoprotein reductase] + H2O + H(+). The catalysed reaction is tetradecanoate + reduced [NADPH--hemoprotein reductase] + O2 = 14-hydroxytetradecanoate + oxidized [NADPH--hemoprotein reductase] + H2O + H(+). It catalyses the reaction hexadecanoate + reduced [NADPH--hemoprotein reductase] + O2 = 16-hydroxyhexadecanoate + oxidized [NADPH--hemoprotein reductase] + H2O + H(+). It carries out the reaction (9Z)-octadecenoate + reduced [NADPH--hemoprotein reductase] + O2 = 18-hydroxy-(9Z)-octadecenoate + oxidized [NADPH--hemoprotein reductase] + H2O + H(+). The enzyme catalyses (5Z,8Z,11Z,14Z)-eicosatetraenoate + reduced [NADPH--hemoprotein reductase] + O2 = 20-hydroxy-(5Z,8Z,11Z,14Z)-eicosatetraenoate + oxidized [NADPH--hemoprotein reductase] + H2O + H(+). The catalysed reaction is 22-hydroxydocosanoate + reduced [NADPH--hemoprotein reductase] + O2 = 22-oxodocosanoate + oxidized [NADPH--hemoprotein reductase] + 2 H2O + H(+). It catalyses the reaction 22-oxodocosanoate + reduced [NADPH--hemoprotein reductase] + O2 = docosanedioate + oxidized [NADPH--hemoprotein reductase] + H2O + 2 H(+). It carries out the reaction (9R,10S)-epoxy-octadecanoate + reduced [NADPH--hemoprotein reductase] + O2 = 18-hydroxy-(9R,10S)-epoxy-octadecanoate + oxidized [NADPH--hemoprotein reductase] + H2O + H(+). The enzyme catalyses 3-hydroxyhexadecanoate + reduced [NADPH--hemoprotein reductase] + O2 = 3,16-dihydroxyhexadecanoate + oxidized [NADPH--hemoprotein reductase] + H2O + H(+). It participates in lipid metabolism; arachidonate metabolism. The protein operates within lipid metabolism; oxylipin biosynthesis. Its activity is regulated as follows. Activated by cytochrome b5. A cytochrome P450 monooxygenase involved in the metabolism of fatty acids and their oxygenated derivatives (oxylipins). Mechanistically, uses molecular oxygen inserting one oxygen atom into a substrate, and reducing the second into a water molecule, with two electrons provided by NADPH via cytochrome P450 reductase (CPR; NADPH-ferrihemoprotein reductase). Catalyzes predominantly the oxidation of the terminal carbon (omega-oxidation) of saturated and unsaturated fatty acids, the catalytic efficiency decreasing in the following order: dodecanoic &gt; tetradecanoic &gt; (9Z)-octadecenoic &gt; (9Z,12Z)-octadecadienoic &gt; hexadecanoic acid. Acts as a major omega-hydroxylase for dodecanoic (lauric) acid in liver. Participates in omega-hydroxylation of (5Z,8Z,11Z,14Z)-eicosatetraenoic acid (arachidonate) to 20-hydroxyeicosatetraenoic acid (20-HETE), a signaling molecule acting both as vasoconstrictive and natriuretic with overall effect on arterial blood pressure. Can also catalyze the oxidation of the penultimate carbon (omega-1 oxidation) of fatty acids with lower efficiency. May contribute to the degradation of saturated very long-chain fatty acids (VLCFAs) such as docosanoic acid, by catalyzing successive omega-oxidations to the corresponding dicarboxylic acid, thereby initiating chain shortening. Omega-hydroxylates (9R,10S)-epoxy-octadecanoate stereoisomer. Plays a minor role in omega-oxidation of long-chain 3-hydroxy fatty acids. Has little activity toward prostaglandins A1 and E1. This chain is Cytochrome P450 4A11, found in Homo sapiens (Human).